A 427-amino-acid polypeptide reads, in one-letter code: L-glutamine:2-deoxy-scyllo-inosose aminotransferase (427 aa).

The interval Met-1–Pro-20 is disordered. Residue Lys-205 is modified to N6-(pyridoxal phosphate)lysine.

The protein belongs to the DegT/DnrJ/EryC1 family. L-glutamine:2-deoxy-scyllo-inosose/scyllo-inosose aminotransferase subfamily. Pyridoxal 5'-phosphate is required as a cofactor.

The enzyme catalyses 2-deoxy-L-scyllo-inosose + L-glutamine = 2-deoxy-scyllo-inosamine + 2-oxoglutaramate. The catalysed reaction is 3-amino-2,3-dideoxy-scyllo-inosose + L-glutamine = 2-deoxystreptamine + 2-oxoglutaramate. The protein operates within metabolic intermediate biosynthesis; 2-deoxystreptamine biosynthesis; 2-deoxystreptamine from D-glucose 6-phosphate: step 2/4. It functions in the pathway antibiotic biosynthesis; kanamycin biosynthesis. Its function is as follows. Catalyzes the PLP-dependent transamination of 2-deoxy-scyllo-inosose (2-DOI) to form 2-deoxy-scyllo-inosamine (2-DOIA) using L-glutamine as the amino donor. Also catalyzes the transamination of 3-amino-2,3-dideoxy-scyllo-inosose (keto-2-DOIA) into 2-deoxystreptamine (2-DOS). This Streptomyces kanamyceticus protein is L-glutamine:2-deoxy-scyllo-inosose aminotransferase (kanB).